The sequence spans 496 residues: Ankyrin repeat domain-containing protein 53 (496 aa).

A compositionally biased stretch (low complexity) spans Met1 to Ser15. The segment at Met1–Thr66 is disordered. Basic and acidic residues predominate over residues Ala51–Glu60. 3 ANK repeats span residues Lys105–Leu135, Asn139–Ala172, and Asn176–Ala205. The tract at residues Leu292–His320 is disordered.

Interacts with PSRC1; recruited by PSRC1 to the spindle during mitosis. Post-translationally, phosphorylated during mitosis.

It localises to the cytoplasm. Its subcellular location is the cytoskeleton. It is found in the spindle. The protein resides in the spindle pole. Required for normal progression through mitosis. Involved in chromosome alignment and cytokinesis via regulation of microtubules polymerization. The polypeptide is Ankyrin repeat domain-containing protein 53 (ANKRD53) (Macaca fascicularis (Crab-eating macaque)).